Reading from the N-terminus, the 128-residue chain is Keratin-associated protein 21-1 (128 aa).

Residues 11 to 117 are 51 X 2 AA repeats of G-[YCGS]; sequence GGCGYGSRYG…RYGCGYGSGC (107 aa).

It belongs to the KRTAP type 21 family. In terms of assembly, interacts with hair keratins. As to expression, strong expression in narrowly defined pattern restricted to the lower and middle cortical regions of the hair shaft in both developing and cycling hair. During hair follicle regression (catagen), expression levels decrease until expression is no longer detectable in follicles at resting stage (telogen).

Its function is as follows. In the hair cortex, hair keratin intermediate filaments are embedded in an interfilamentous matrix, consisting of hair keratin-associated proteins (KRTAP), which are essential for the formation of a rigid and resistant hair shaft through their extensive disulfide bond cross-linking with abundant cysteine residues of hair keratins. The matrix proteins include the high-sulfur and high-glycine-tyrosine keratins. This Mus musculus (Mouse) protein is Keratin-associated protein 21-1 (Krtap21-1).